The chain runs to 552 residues: 5'-AMP-activated protein kinase catalytic subunit alpha-2 (552 aa).

In terms of domain architecture, Protein kinase spans 16 to 268 (YVLGDTLGVG…IKDIREHEWF (253 aa)). Residues 22-30 (LGVGTFGKV) and Lys-45 each bind ATP. The active-site Proton acceptor is the Asp-139. Position 172 is a phosphothreonine; by LKB1 and CaMKK2 (Thr-172). Residue Thr-258 is modified to Phosphothreonine. The tract at residues 291–376 (EAVKEVCEKF…PERMPPLIAD (86 aa)) is AIS. Ser-377 bears the Phosphoserine mark. The segment at 477–521 (VEQRSGSSTPQRSCSAAGLHRPRSSFDSTTAESHSLSGSLTGSLT) is disordered. Over residues 480–490 (RSGSSTPQRSC) the composition is skewed to polar residues. At Ser-491 the chain carries Phosphoserine. Positions 501–510 (SFDSTTAESH) are enriched in polar residues. Low complexity predominate over residues 511–521 (SLSGSLTGSLT).

This sequence belongs to the protein kinase superfamily. CAMK Ser/Thr protein kinase family. SNF1 subfamily. As to quaternary structure, AMPK is a heterotrimer of an alpha catalytic subunit (PRKAA1 or PRKAA2), a beta (PRKAB1 or PRKAB2) and a gamma non-catalytic subunits (PRKAG1, PRKAG2 or PRKAG3). Interacts with FNIP1 and FNIP2. Associates with internalized insulin receptor/INSR complexes on Golgi/endosomal membranes; PRKAA2/AMPK2 together with ATIC and HACD3/PTPLAD1 is proposed to be part of a signaling network regulating INSR autophosphorylation and endocytosis. Interacts with ARF6. The phosphorylated form at Thr-172 mediated by CamKK2 interacts with ACSS2. Requires Mg(2+) as cofactor. Ubiquitinated. In terms of processing, phosphorylated at Thr-172 by STK11/LKB1 in complex with STE20-related adapter-alpha (STRADA) pseudo kinase and CAB39. Also phosphorylated at Thr-172 by CAMKK2; triggered by a rise in intracellular calcium ions, without detectable changes in the AMP/ATP ratio. CAMKK1 can also phosphorylate Thr-172, but at much lower level. Dephosphorylated by protein phosphatase 2A and 2C (PP2A and PP2C). Phosphorylated by ULK1; leading to negatively regulate AMPK activity and suggesting the existence of a regulatory feedback loop between ULK1 and AMPK. Dephosphorylated by PPM1A and PPM1B at Thr-172 (mediated by STK11/LKB1).

The protein localises to the cytoplasm. It localises to the nucleus. It carries out the reaction L-seryl-[protein] + ATP = O-phospho-L-seryl-[protein] + ADP + H(+). It catalyses the reaction L-threonyl-[protein] + ATP = O-phospho-L-threonyl-[protein] + ADP + H(+). The enzyme catalyses L-seryl-[acetyl-CoA carboxylase] + ATP = O-phospho-L-seryl-[acetyl-CoA carboxylase] + ADP + H(+). The catalysed reaction is L-seryl-[3-hydroxy-3-methylglutaryl-coenzyme A reductase] + ATP = O-phospho-L-seryl-[3-hydroxy-3-methylglutaryl-coenzyme A reductase] + ADP + H(+). Its activity is regulated as follows. Activated by phosphorylation on Thr-172. Binding of AMP to non-catalytic gamma subunit (PRKAG1, PRKAG2 or PRKAG3) results in allosteric activation, inducing phosphorylation on Thr-172. AMP-binding to gamma subunit also sustains activity by preventing dephosphorylation of Thr-172. ADP also stimulates Thr-172 phosphorylation, without stimulating already phosphorylated AMPK. ATP promotes dephosphorylation of Thr-172, rendering the enzyme inactive. Under physiological conditions AMPK mainly exists in its inactive form in complex with ATP, which is much more abundant than AMP. AMPK is activated by antihyperglycemic drug metformin, a drug prescribed to patients with type 2 diabetes: in vivo, metformin seems to mainly inhibit liver gluconeogenesis. However, metformin can be used to activate AMPK in muscle and other cells in culture or ex vivo. Selectively inhibited by compound C (6-[4-(2-Piperidin-1-yl-ethoxy)-phenyl)]-3-pyridin-4-yl-pyyrazolo[1,5-a] pyrimidine. Activated by resveratrol, a natural polyphenol present in red wine, and S17834, a synthetic polyphenol. Salicylate/aspirin directly activates kinase activity, primarily by inhibiting Thr-172 dephosphorylation. Its function is as follows. Catalytic subunit of AMP-activated protein kinase (AMPK), an energy sensor protein kinase that plays a key role in regulating cellular energy metabolism. In response to reduction of intracellular ATP levels, AMPK activates energy-producing pathways and inhibits energy-consuming processes: inhibits protein, carbohydrate and lipid biosynthesis, as well as cell growth and proliferation. AMPK acts via direct phosphorylation of metabolic enzymes, and by longer-term effects via phosphorylation of transcription regulators. Regulates lipid synthesis by phosphorylating and inactivating lipid metabolic enzymes such as ACACA, ACACB, GYS1, HMGCR and LIPE; regulates fatty acid and cholesterol synthesis by phosphorylating acetyl-CoA carboxylase (ACACA and ACACB) and hormone-sensitive lipase (LIPE) enzymes, respectively. Promotes lipolysis of lipid droplets by mediating phosphorylation of isoform 1 of CHKA (CHKalpha2). Regulates insulin-signaling and glycolysis by phosphorylating IRS1, PFKFB2 and PFKFB3. Involved in insulin receptor/INSR internalization. AMPK stimulates glucose uptake in muscle by increasing the translocation of the glucose transporter SLC2A4/GLUT4 to the plasma membrane, possibly by mediating phosphorylation of TBC1D4/AS160. Regulates transcription and chromatin structure by phosphorylating transcription regulators involved in energy metabolism such as CRTC2/TORC2, FOXO3, histone H2B, HDAC5, MEF2C, MLXIPL/ChREBP, EP300, HNF4A, p53/TP53, SREBF1, SREBF2 and PPARGC1A. Acts as a key regulator of glucose homeostasis in liver by phosphorylating CRTC2/TORC2, leading to CRTC2/TORC2 sequestration in the cytoplasm. In response to stress, phosphorylates 'Ser-36' of histone H2B (H2BS36ph), leading to promote transcription. Acts as a key regulator of cell growth and proliferation by phosphorylating FNIP1, TSC2, RPTOR, WDR24 and ATG1/ULK1: in response to nutrient limitation, negatively regulates the mTORC1 complex by phosphorylating RPTOR component of the mTORC1 complex and by phosphorylating and activating TSC2. Also phosphorylates and inhibits GATOR2 subunit WDR24 in response to nutrient limitation, leading to suppress glucose-mediated mTORC1 activation. In response to energetic stress, phosphorylates FNIP1, inactivating the non-canonical mTORC1 signaling, thereby promoting nuclear translocation of TFEB and TFE3, and inducing transcription of lysosomal or autophagy genes. In response to nutrient limitation, promotes autophagy by phosphorylating and activating ATG1/ULK1. In that process, it also activates WDR45/WIPI4. Phosphorylates CASP6, thereby preventing its autoprocessing and subsequent activation. AMPK also acts as a regulator of circadian rhythm by mediating phosphorylation of CRY1, leading to destabilize it. May regulate the Wnt signaling pathway by phosphorylating CTNNB1, leading to stabilize it. Also acts as a regulator of cellular polarity by remodeling the actin cytoskeleton; probably by indirectly activating myosin. Also phosphorylates CFTR, EEF2K, KLC1, NOS3 and SLC12A1. Plays an important role in the differential regulation of pro-autophagy (composed of PIK3C3, BECN1, PIK3R4 and UVRAG or ATG14) and non-autophagy (composed of PIK3C3, BECN1 and PIK3R4) complexes, in response to glucose starvation. Can inhibit the non-autophagy complex by phosphorylating PIK3C3 and can activate the pro-autophagy complex by phosphorylating BECN1. Upon glucose starvation, promotes ARF6 activation in a kinase-independent manner leading to cell migration. Upon glucose deprivation mediates the phosphorylation of ACSS2 at 'Ser-659', which exposes the nuclear localization signal of ACSS2, required for its interaction with KPNA1 and nuclear translocation. Upon stress, regulates mitochondrial fragmentation through phosphorylation of MTFR1L. The chain is 5'-AMP-activated protein kinase catalytic subunit alpha-2 from Homo sapiens (Human).